The sequence spans 37 residues: Large ribosomal subunit protein bL36A (37 aa).

This sequence belongs to the bacterial ribosomal protein bL36 family.

The protein is Large ribosomal subunit protein bL36A of Clavibacter sepedonicus (Clavibacter michiganensis subsp. sepedonicus).